A 613-amino-acid chain; its full sequence is Dihydroxy-acid dehydratase (613 aa).

Residue Asp-81 participates in Mg(2+) binding. Residue Cys-122 coordinates [2Fe-2S] cluster. Mg(2+)-binding residues include Asp-123 and Lys-124. Lys-124 bears the N6-carboxylysine mark. [2Fe-2S] cluster is bound at residue Cys-195. Glu-491 lines the Mg(2+) pocket. Ser-517 serves as the catalytic Proton acceptor.

It belongs to the IlvD/Edd family. Homodimer. Requires [2Fe-2S] cluster as cofactor. It depends on Mg(2+) as a cofactor.

It catalyses the reaction (2R)-2,3-dihydroxy-3-methylbutanoate = 3-methyl-2-oxobutanoate + H2O. The catalysed reaction is (2R,3R)-2,3-dihydroxy-3-methylpentanoate = (S)-3-methyl-2-oxopentanoate + H2O. It functions in the pathway amino-acid biosynthesis; L-isoleucine biosynthesis; L-isoleucine from 2-oxobutanoate: step 3/4. Its pathway is amino-acid biosynthesis; L-valine biosynthesis; L-valine from pyruvate: step 3/4. In terms of biological role, functions in the biosynthesis of branched-chain amino acids. Catalyzes the dehydration of (2R,3R)-2,3-dihydroxy-3-methylpentanoate (2,3-dihydroxy-3-methylvalerate) into 2-oxo-3-methylpentanoate (2-oxo-3-methylvalerate) and of (2R)-2,3-dihydroxy-3-methylbutanoate (2,3-dihydroxyisovalerate) into 2-oxo-3-methylbutanoate (2-oxoisovalerate), the penultimate precursor to L-isoleucine and L-valine, respectively. The chain is Dihydroxy-acid dehydratase from Buchnera aphidicola subsp. Schlechtendalia chinensis.